The sequence spans 280 residues: Small ribosomal subunit protein uS2 (280 aa).

The protein belongs to the universal ribosomal protein uS2 family.

This chain is Small ribosomal subunit protein uS2, found in Desulforapulum autotrophicum (strain ATCC 43914 / DSM 3382 / VKM B-1955 / HRM2) (Desulfobacterium autotrophicum).